Consider the following 578-residue polypeptide: Rhamnogalacturonate lyase (578 aa).

An N-terminal signal peptide occupies residues 1–27 (MHMNKPLQAWRTPLLTLIFVLPLTATG).

The protein belongs to the polysaccharide lyase 4 family.

The protein localises to the secreted. The enzyme catalyses Endotype eliminative cleavage of L-alpha-rhamnopyranosyl-(1-&gt;4)-alpha-D-galactopyranosyluronic acid bonds of rhamnogalacturonan I domains in ramified hairy regions of pectin leaving L-rhamnopyranose at the reducing end and 4-deoxy-4,5-unsaturated D-galactopyranosyluronic acid at the non-reducing end.. Degrades the rhamnogalacturonan I (RG-I) backbone of pectin. Is required for the full virulence of E.chrysanthemi strain 3937 as it is involved in rotting of plant tissue. This is Rhamnogalacturonate lyase (rhiE) from Dickeya dadantii (strain 3937) (Erwinia chrysanthemi (strain 3937)).